A 929-amino-acid polypeptide reads, in one-letter code: Urea transporter 2 (929 aa).

Over residues 1 to 11 the composition is skewed to basic and acidic residues; it reads MSDHPLKEMSD. The interval 1–89 is disordered; the sequence is MSDHPLKEMS…KRRESELPRR (89 aa). A compositionally biased stretch (low complexity) spans 31-42; the sequence is SELSSPTWPSSS. Positions 55–88 are enriched in basic and acidic residues; that stretch reads PEEKDLRSSDEDSHIVKIEKPNERSKRRESELPR. A run of 9 helical transmembrane segments spans residues 133-155, 162-179, 184-204, 212-232, 241-261, 310-330, 349-371, 378-399, and 400-420; these read GAAQVMFVNNPLSGLIIFIGLLI, IAGALGTVVSTLAALALS, AIASGLHGYNGMLVGLLVAVF, WWLLFPVTFASMACPVISSAL, LPVFTLPFNIALTLYLAATGH, GGVILVALFISSPLICLHAAI, IYTGLWSYNCVLSCVAIGGMFYV, LLALVCALFCAYTGAALSNMMA, and VVGVPPGTWAFCLSTLTFLLL. The tract at residues 451-480 is disordered; the sequence is SDEQKPPNGGGGEQSHGGGQRKAEEGSETV. Gly residues predominate over residues 458–470; it reads NGGGGEQSHGGGQ. At serine 486 the chain carries Phosphoserine. 4 helical membrane-spanning segments follow: residues 609 to 629, 647 to 667, 675 to 695, and 704 to 724; these read GILIVLGLFVQNPWWAISGCL, AIAAGLHGYNGVLVGLLMAVF, WWLLLPVIVMSMTCPILSSAL, and LPVFTLPFNIAVTLYLAATGH. An N-linked (GlcNAc...) asparagine glycan is attached at asparagine 742. A run of 4 helical transmembrane segments spans residues 773-793, 812-832, 841-861, and 863-883; these read GGIFLVALFVSSPLICLHAAI, IYFGLCGFNSTLACIAIGGMF, LLAIACALFAAYLGAALANML, and VFGLPPCTWPFCLSALTFLLL.

It belongs to the urea transporter family. In terms of assembly, interacts with SNAPIN which enhances its urea transport activity. Expressed in the inner medulla of the kidney. As to expression, expressed in both the inner and outer renal medulla of the kidney.

Its subcellular location is the apical cell membrane. It is found in the cell membrane. The catalysed reaction is urea(in) = urea(out). Inhibited by phloretin. Activated by vasopressin, forskolin, 3-isobutyl-1-methylxanthine (IBMX) and cAMP. Its activity is regulated as follows. Inhibited by phloretin. With respect to regulation, inhibited by urea analogs and phloretin and activated by forskolin. Inhibited by phloretin and activated by forskolin. Its function is as follows. Mediates the transport of urea driven by a concentration gradient across the cell membrane of the kidney inner medullary collecting duct which is critical to the urinary concentrating mechanism. In Rattus norvegicus (Rat), this protein is Urea transporter 2 (Slc14a2).